The chain runs to 293 residues: Acetylglutamate kinase (293 aa).

Substrate-binding positions include 68–69, R90, and N189; that span reads GG.

It belongs to the acetylglutamate kinase family. ArgB subfamily.

Its subcellular location is the cytoplasm. It carries out the reaction N-acetyl-L-glutamate + ATP = N-acetyl-L-glutamyl 5-phosphate + ADP. Its pathway is amino-acid biosynthesis; L-arginine biosynthesis; N(2)-acetyl-L-ornithine from L-glutamate: step 2/4. Its function is as follows. Catalyzes the ATP-dependent phosphorylation of N-acetyl-L-glutamate. The sequence is that of Acetylglutamate kinase from Mycolicibacterium smegmatis (strain ATCC 700084 / mc(2)155) (Mycobacterium smegmatis).